Consider the following 688-residue polypeptide: Polyribonucleotide nucleotidyltransferase (688 aa).

2 residues coordinate Mg(2+): D484 and D490. In terms of domain architecture, KH spans P550 to I609. The S1 motif domain maps to D626 to A688.

This sequence belongs to the polyribonucleotide nucleotidyltransferase family. It depends on Mg(2+) as a cofactor.

The protein localises to the cytoplasm. It carries out the reaction RNA(n+1) + phosphate = RNA(n) + a ribonucleoside 5'-diphosphate. Functionally, involved in mRNA degradation. Catalyzes the phosphorolysis of single-stranded polyribonucleotides processively in the 3'- to 5'-direction. The protein is Polyribonucleotide nucleotidyltransferase of Helicobacter pylori (strain P12).